Here is a 609-residue protein sequence, read N- to C-terminus: D-apionate lactonase (609 aa).

The enzyme catalyses D-apionolactone + H2O = D-apionate + H(+). The protein operates within carbohydrate metabolism. In terms of biological role, involved in catabolism of D-apiose. Hydrolyzes D-apionolactone to D-apionate. The sequence is that of D-apionate lactonase from Brucella anthropi (strain ATCC 49188 / DSM 6882 / CCUG 24695 / JCM 21032 / LMG 3331 / NBRC 15819 / NCTC 12168 / Alc 37) (Ochrobactrum anthropi).